The chain runs to 472 residues: MSTSNGSTENIQKPLRKIPDITGTPILTAIKDRLDFFYNQGQYEYFQSRVKKNNSTILRMNMIPGPFASNPKIVALCDAASFPTLFDPSKVSKVNSLTGNYMPALSFTGGYRVCAYLDPSEPTHTKIKQVFFNAQAAKKDTFIPTFVSTFNSMFDKMDAEVESKKKAEFTKFNEAAVFEFVGLALVGPKPAREVFDSAKKSVFFQFHPFITAGLPALVEELAFHMFPFPSFVAKSSYKILYEYFSTGGSWILDNAEEIGLSREEAIHHLIFTWAINAYLGIRTCLMRLFKWIVASGPDLQEKLAREVRSVVRSEEGKITFAGIEKMELVKSVAYESFRFDPPVQVQYGTAKSDLIIESHDGKYQVKKGEMLCGFQPMATRDPKVFDRADEFVPDRFMGDGKKLVKHVLWANGYGTDAPKADDKICAGKDLGVLVGRLLIAVMFLRYDKIGGVVGKTMEEVDVIVNELTKVAV.

C425 is a binding site for heme.

It belongs to the cytochrome P450 family. Requires heme as cofactor. In terms of tissue distribution, expressed mainly in bulbs, and at lower levels in roots.

It carries out the reaction (13S)-hydroperoxy-(9Z,11E)-octadecadienoate = etheroleate + H2O. The catalysed reaction is (13S)-hydroperoxy-(9Z,11E,15Z)-octadecatrienoate = etherolenate + H2O. It catalyses the reaction (9S)-hydroperoxy-(10E,12Z)-octadecadienoate = colneleate + H2O. The enzyme catalyses (9S)-hydroperoxy-(10E,12Z,15Z)-octadecatrienoate = colnelenate + H2O. It functions in the pathway lipid metabolism; oxylipin biosynthesis. In terms of biological role, divinyl ether synthase involved in oxylipin biosynthesis. Catalyzes the conversion of (13S)-hydroperoxy-(9Z,11E)-octadecadienoate (13-HPOD) to etheroleate and (13S)-hydroperoxy-(9Z,11E,15Z)-octadecatrienoate (13-HPOT) to etherolenate. Catalyzes the conversion of (9S)-hydroperoxy-(10E,12Z)-octadecadienoate (9-HPOD) to colneleate and (9S)-hydroperoxy-(10E,12Z,15Z)-octadecatrienoate (9-HPOT) colnelenate. The protein is Divinyl ether synthase CYP74 of Allium sativum (Garlic).